A 446-amino-acid polypeptide reads, in one-letter code: tRNA-2-methylthio-N(6)-dimethylallyladenosine synthase (446 aa).

Positions 3–120 (KKIYIKTFGC…LPEMLKQRRS (118 aa)) constitute an MTTase N-terminal domain. [4Fe-4S] cluster is bound by residues Cys12, Cys49, Cys83, Cys157, Cys161, and Cys164. Positions 143 to 375 (KVEGATAFVS…QAVIDQNTRR (233 aa)) constitute a Radical SAM core domain. Residues 378-444 (DEMVGSVQRI…AYTLRGEIVV (67 aa)) enclose the TRAM domain.

This sequence belongs to the methylthiotransferase family. MiaB subfamily. In terms of assembly, monomer. The cofactor is [4Fe-4S] cluster.

It localises to the cytoplasm. It catalyses the reaction N(6)-dimethylallyladenosine(37) in tRNA + (sulfur carrier)-SH + AH2 + 2 S-adenosyl-L-methionine = 2-methylsulfanyl-N(6)-dimethylallyladenosine(37) in tRNA + (sulfur carrier)-H + 5'-deoxyadenosine + L-methionine + A + S-adenosyl-L-homocysteine + 2 H(+). Functionally, catalyzes the methylthiolation of N6-(dimethylallyl)adenosine (i(6)A), leading to the formation of 2-methylthio-N6-(dimethylallyl)adenosine (ms(2)i(6)A) at position 37 in tRNAs that read codons beginning with uridine. This chain is tRNA-2-methylthio-N(6)-dimethylallyladenosine synthase, found in Herminiimonas arsenicoxydans.